A 146-amino-acid chain; its full sequence is Large ribosomal subunit protein bL19 (146 aa).

A disordered region spans residues 116–146 (ADRKRIDQDRAAERAAKEEAQKAQEPKASQE). The segment covering 119–146 (KRIDQDRAAERAAKEEAQKAQEPKASQE) has biased composition (basic and acidic residues).

In terms of assembly, part of the 50S risobomal subunit. Contacts protein L14. Forms a bridge to the 30S subunit in the 70S ribosome, contacting the 16S rRNA.

Functionally, contacts the 16S rRNA of the 30S subunit (part of bridge B6), connecting the 2 subunits. The polypeptide is Large ribosomal subunit protein bL19 (rplS) (Thermus thermophilus (strain ATCC 27634 / DSM 579 / HB8)).